The sequence spans 457 residues: Ig mu chain C region (457 aa).

A CH1 region spans residues 1–105; that stretch reads SSSAPLLFPL…GEKEKKVELQ (105 aa). A disulfide bridge connects residues cysteine 27 and cysteine 89. N-linked (GlcNAc...) asparagine glycosylation is found at asparagine 45 and asparagine 113. A CH2 region spans residues 106–220; sequence VTPELPPNVS…KNVSSVCMGD (115 aa). Cysteine 136 and cysteine 200 are joined by a disulfide. N-linked (GlcNAc...) asparagine glycosylation is found at asparagine 212, asparagine 276, and asparagine 283. A CH3 region spans residues 221–326; sequence DTSTGISVFL…PLKQSLSRPK (106 aa). 2 disulfide bridges follow: cysteine 248–cysteine 307 and cysteine 355–cysteine 417. Residues 327-457 form a CH4 region; the sequence is DVANDPPSVF…VLSDTASTCY (131 aa). A glycan (N-linked (GlcNAc...) asparagine) is linked at asparagine 444.

The polypeptide is Ig mu chain C region (Suncus murinus (Asian house shrew)).